The primary structure comprises 811 residues: Vacuolar protein sorting-associated protein 70 (811 aa).

Residues 1–21 are compositionally biased toward basic and acidic residues; sequence MRMIQRERKREKEEGQLKERT. The interval 1–63 is disordered; sequence MRMIQRERKR…MNDSFTLTSR (63 aa). N-linked (GlcNAc...) asparagine glycosylation occurs at Asn-55. The chain crosses the membrane as a helical span at residues 90–110; that stretch reads FMYLILASLLLYMGFVAAFAP. N-linked (GlcNAc...) asparagine glycosylation occurs at Asn-237. Residues 334–367 form a disordered region; the sequence is FSDTPGDPTTPGYPSKDSDTEHMSPVGRVPRIPS. A compositionally biased stretch (low complexity) spans 336–345; that stretch reads DTPGDPTTPG. Residues His-445, Asp-456, and Asp-522 each coordinate Zn(2+). N-linked (GlcNAc...) asparagine glycans are attached at residues Asn-568 and Asn-599. His-607 provides a ligand contact to Zn(2+). N-linked (GlcNAc...) asparagine glycosylation is present at Asn-670.

The protein belongs to the peptidase M28 family. M28B subfamily. It depends on Zn(2+) as a cofactor.

It localises to the membrane. Functionally, involved in vacuolar protein sorting. The protein is Vacuolar protein sorting-associated protein 70 (VPS70) of Saccharomyces cerevisiae (strain ATCC 204508 / S288c) (Baker's yeast).